The primary structure comprises 231 residues: Uridylate cyclase (231 aa).

The region spanning Thr-46–Thr-178 is the Guanylate cyclase domain. Residue Tyr-49 participates in a ribonucleoside 5'-triphosphate binding. Residues Asp-51 and Asp-95 each contribute to the Mn(2+) site. A ribonucleoside 5'-triphosphate is bound at residue Arg-96.

This sequence belongs to the adenylyl cyclase class-4/guanylyl cyclase family. Pyrimidine cyclase subfamily. In terms of assembly, homodimer. It depends on Mn(2+) as a cofactor.

It is found in the cytoplasm. It carries out the reaction UTP = 3',5'-cyclic UMP + diphosphate. Pycsar (pyrimidine cyclase system for antiphage resistance) provides immunity against bacteriophage. The pyrimidine cyclase (PycC) synthesizes cyclic nucleotides in response to infection; these serve as specific second messenger signals. The signal activates the adjacent effector, leading to bacterial cell death and abortive phage infection. A clade B Pycsar system. In terms of biological role, the pyrimidine cyclase gene of a two-gene Pycsar system, generates cyclic UMP (cUMP) from UTP probably in response to bacteriophage infection. Expression of this and adjacent effector XpPycTIR (AC P0DV29) confers resistance to bacteriophage T7. When cells expressing the Pycsar system are infected phage T7 at low multiplicity of infection (0.2 MOI) the culture survives, at 2.0 MOI bacteria enter growth arrest. The same cells enter growth arrest after exposure to 2.5 mM cUMP but not cCMP; the effector protein responds only to the cUMP produced by its cognate NTP cyclase. The sequence is that of Uridylate cyclase from Xanthomonas perforans.